We begin with the raw amino-acid sequence, 95 residues long: Probable FAD-linked sulfhydryl oxidase OPG072 (95 aa).

The Intravirion portion of the chain corresponds to methionine 1–arginine 8. An ERV/ALR sulfhydryl oxidase domain is found at methionine 1–leucine 95. A helical transmembrane segment spans residues alanine 9 to glycine 25. Topologically, residues asparagine 26–leucine 95 are virion surface. Residues cysteine 43 and cysteine 46 are joined by a disulfide bond.

This sequence belongs to the orthopoxvirus OPG072 family. As to quaternary structure, interacts with OPG128; this interaction involves formation of a transient disulfide-bonded intermediate, allowing disulfide bond transfer. FAD serves as cofactor.

It is found in the virion membrane. It localises to the host cytoplasm. The enzyme catalyses 2 R'C(R)SH + O2 = R'C(R)S-S(R)CR' + H2O2. FAD-dependent sulfhydryl oxidase that catalyzes disulfide bond formation. The complete pathway for formation of disulfide bonds in intracellular virion membrane proteins sequentially involves thiol-disulfide transfer between OPG072, OPG128 and OPG088. The protein is Probable FAD-linked sulfhydryl oxidase OPG072 (OPG072) of Variola virus (isolate Human/India/Ind3/1967) (VARV).